Consider the following 1189-residue polypeptide: Phosphatidylinositol 3,4,5-trisphosphate 5-phosphatase 1 (1189 aa).

Residues 5–101 (WNHGNITRSK…GLVTHLQYPV (97 aa)) form the SH2 domain. The segment covering 103 to 117 (LEEEDTGDDPEEDTV) has biased composition (acidic residues). Residues 103–132 (LEEEDTGDDPEEDTVESVVSPPELPPRNIP) form a disordered region. The short motif at 124–129 (PELPPR) is the SH3-binding 1 element. Ser243 is modified (phosphoserine). The segment at 870–906 (TERDESSGPKTLKSLTSHDPMKQWEVTSRAPPCSGSS) is disordered. Residues 912–915 (NPNY) carry the NPXY motif 1 motif. The residue at position 915 (Tyr915) is a Phosphotyrosine. The tract at residues 922–1189 (GPPMPLHVKQ…PGPLGRTAMQ (268 aa)) is disordered. Positions 931–943 (QTLSPDQQPTAWS) are enriched in polar residues. Ser934 bears the Phosphoserine mark. At Tyr944 the chain carries Phosphotyrosine. Phosphoserine is present on Ser960. Positions 961 to 971 (PPTPPGQPPIS) are enriched in pro residues. Phosphothreonine is present on Thr963. An SH3-binding 2 motif is present at residues 969–974 (PISPKK). Ser971 carries the post-translational modification Phosphoserine. An interaction with DAB2 region spans residues 1016–1030 (MFENPLYGSLSSFPK). The NPXY motif 2 motif lies at 1019 to 1022 (NPLY). Residue Tyr1022 is modified to Phosphotyrosine. The segment covering 1033–1047 (PRKDQESPKMPRKEP) has biased composition (basic and acidic residues). The SH3-binding 3 signature appears at 1040-1051 (PKMPRKEPPPCP). Residues 1134 to 1145 (PPTPTPRPPLPV) show a composition bias toward pro residues. Residues 1157–1177 (KGRDYRDNTELPHHGKHRPEE) show a composition bias toward basic and acidic residues.

It belongs to the inositol 1,4,5-trisphosphate 5-phosphatase family. In terms of assembly, interacts with tyrosine phosphorylated form of SHC1. Interacts with tyrosine phosphorylated form of DOK1. Interacts with tyrosine phosphorylated form of DOK3. Interacts with tyrosine phosphorylated form of SLAMF1/CD150. Interacts with PTPN11 in response to IL-3. Interacts with receptor EPOR. Interacts with receptors MS4A2/FCER1B and FCER1G. Interacts with receptors FCGR2B and FCGR3. Interacts with receptor FCGR2A, leading to regulate gene expression during the phagocytic process. Interacts with GRB2. Interacts with PLCG1. Interacts with tyrosine kinases SRC and TEC. Interacts with c-Met/MET. Interacts with MILR1 (tyrosine-phosphorylated). Can weakly interact (via NPXY motif 2) with DAB2 (via PID domain); the interaction is impaired by tyrosine phosphorylation of the NPXY motif. Interacts with FCRL3 and FCRL6 (tyrosine phosphorylated form). Interacts (via SH2 domain) with tyrosine phosphorylated KLRC1 (via ITIM). Interacts with MPL/TPOR. Tyrosine phosphorylated by the members of the SRC family after exposure to a diverse array of extracellular stimuli such as cytokines, growth factors, antibodies, chemokines, integrin ligands and hypertonic and oxidative stress. Phosphorylated upon IgG receptor FCGR2B-binding. Specifically expressed in immune and hematopoietic cells. Expressed in bone marrow and blood cells. Levels vary considerably within this compartment. Present in at least 74% of immature CD34+ cells, whereas within the more mature population of CD33+ cells, it is present in only 10% of cells. Present in the majority of T-cells, while it is present in a minority of B-cells (at protein level).

The protein localises to the cytoplasm. It localises to the cell membrane. It is found in the membrane raft. The protein resides in the cytoskeleton. Its subcellular location is the membrane. The enzyme catalyses a 1,2-diacyl-sn-glycero-3-phospho-(1D-myo-inositol-3,4,5-trisphosphate) + H2O = a 1,2-diacyl-sn-glycero-3-phospho-(1D-myo-inositol-3,4-bisphosphate) + phosphate. It carries out the reaction 1D-myo-inositol 1,3,4,5-tetrakisphosphate + H2O = 1D-myo-inositol 1,3,4-trisphosphate + phosphate. The catalysed reaction is a 1,2-diacyl-sn-glycero-3-phospho-(1D-myo-inositol-4,5-bisphosphate) + H2O = a 1,2-diacyl-sn-glycero-3-phospho-(1D-myo-inositol 4-phosphate) + phosphate. With respect to regulation, activated upon translocation to the sites of synthesis of PtdIns(3,4,5)P3 in the membrane. In terms of biological role, phosphatidylinositol (PtdIns) phosphatase that specifically hydrolyzes the 5-phosphate of phosphatidylinositol-3,4,5-trisphosphate (PtdIns(3,4,5)P3) to produce PtdIns(3,4)P2, thereby negatively regulating the PI3K (phosphoinositide 3-kinase) pathways. Able also to hydrolyzes the 5-phosphate of phosphatidylinositol-4,5-bisphosphate (PtdIns(4,5)P3) and inositol 1,3,4,5-tetrakisphosphate. Acts as a negative regulator of B-cell antigen receptor signaling. Mediates signaling from the FC-gamma-RIIB receptor (FCGR2B), playing a central role in terminating signal transduction from activating immune/hematopoietic cell receptor systems. Acts as a negative regulator of myeloid cell proliferation/survival and chemotaxis, mast cell degranulation, immune cells homeostasis, integrin alpha-IIb/beta-3 signaling in platelets and JNK signaling in B-cells. Regulates proliferation of osteoclast precursors, macrophage programming, phagocytosis and activation and is required for endotoxin tolerance. Involved in the control of cell-cell junctions, CD32a signaling in neutrophils and modulation of EGF-induced phospholipase C activity. Key regulator of neutrophil migration, by governing the formation of the leading edge and polarization required for chemotaxis. Modulates FCGR3/CD16-mediated cytotoxicity in NK cells. Mediates the activin/TGF-beta-induced apoptosis through its Smad-dependent expression. This Homo sapiens (Human) protein is Phosphatidylinositol 3,4,5-trisphosphate 5-phosphatase 1 (INPP5D).